A 428-amino-acid chain; its full sequence is Elongation factor 1-alpha (428 aa).

The 211-residue stretch at 5-215 (KPHVNIVFIG…ALDQIPEPPK (211 aa)) folds into the tr-type G domain. The segment at 14-21 (GHVDHGKS) is G1. 14–21 (GHVDHGKS) contacts GTP. A Mg(2+)-binding site is contributed by Ser21. Positions 68–72 (GITID) are G2. The G3 stretch occupies residues 89–92 (DAPG). GTP contacts are provided by residues 89 to 93 (DAPGH) and 144 to 147 (NKMD). The segment at 144-147 (NKMD) is G4. The interval 181-183 (SAW) is G5.

This sequence belongs to the TRAFAC class translation factor GTPase superfamily. Classic translation factor GTPase family. EF-Tu/EF-1A subfamily.

Its subcellular location is the cytoplasm. It catalyses the reaction GTP + H2O = GDP + phosphate + H(+). Its function is as follows. GTP hydrolase that promotes the GTP-dependent binding of aminoacyl-tRNA to the A-site of ribosomes during protein biosynthesis. The polypeptide is Elongation factor 1-alpha (Thermococcus onnurineus (strain NA1)).